The chain runs to 315 residues: uncharacterized protein (315 aa).

Coiled coils occupy residues 184 to 212 (AGEE…TPEQ) and 238 to 275 (EEHR…YKEK).

It belongs to the IIV-6 287R family.

This is an uncharacterized protein from Acheta domesticus (House cricket).